A 194-amino-acid chain; its full sequence is Large ribosomal subunit protein eL15 (194 aa).

The segment covering 162–173 (KTSAGRRARGLH) has biased composition (basic residues). The tract at residues 162-194 (KTSAGRRARGLHNRGTGTEKCRPSLTSHKNQGK) is disordered. Over residues 185 to 194 (SLTSHKNQGK) the composition is skewed to polar residues.

This sequence belongs to the eukaryotic ribosomal protein eL15 family.

The chain is Large ribosomal subunit protein eL15 from Methanocorpusculum labreanum (strain ATCC 43576 / DSM 4855 / Z).